Reading from the N-terminus, the 950-residue chain is UPF0182 protein P9303_14611 (950 aa).

9 helical membrane-spanning segments follow: residues 20–40 (LLLS…WLWF), 53–73 (WLWQ…CQLW), 102–122 (LLGC…LAWL), 141–161 (IWAL…MLGN), 173–193 (CFCF…ALAI), 209–229 (FGLG…AQLV), 259–279 (CDVM…LLWL), 308–328 (SLAS…PWIQ), and 335–355 (LIAS…APFV).

The protein belongs to the UPF0182 family.

The protein resides in the cell membrane. The sequence is that of UPF0182 protein P9303_14611 from Prochlorococcus marinus (strain MIT 9303).